The primary structure comprises 104 residues: Thioredoxin 1 (104 aa).

Residues 2-104 (VKIVTSQAEF…LKQLIEKYAA (103 aa)) form the Thioredoxin domain. Catalysis depends on nucleophile residues C30 and C33. C30 and C33 are disulfide-bonded.

Belongs to the thioredoxin family. In terms of processing, the disulfide bond between Cys-30 and Cys-33 acts as a redox-active center and is reduced by thioredoxin reductase TRXR.

The protein localises to the cytoplasm. Its function is as follows. Participates in various redox reactions through the reversible oxidation of its active center dithiol to a disulfide and catalyzes dithiol-disulfide exchange reactions. By modifying the redox status of targeted proteins, induces changes in their structure and activity. Reduces oxidized glutathione (GSSG), thereby acting as a backup for the glutathione redox system. Reduces nitroglutathione (GSNO), a compound involved in the transport of nitric oxide (NO). Also reduces oxidative stress by detoxifying hydrogen peroxide, tert-butyl hydroperoxide and cumene hydroperoxide. Activates ornithine aminotransferase OAT by reducing a disulfide bond in the substrate binding loop, thereby enhancing the affinity of OAT for its substrates. May reduce S-adenosyl-L-homocysteine hydrolase SAHH. In Plasmodium falciparum (isolate 3D7), this protein is Thioredoxin 1.